A 256-amino-acid chain; its full sequence is Triosephosphate isomerase (256 aa).

A substrate-binding site is contributed by 9–11 (NWK). The active-site Electrophile is the His-97. The active-site Proton acceptor is Glu-169. Substrate-binding positions include Gly-175, Ser-214, and 235-236 (GG).

Belongs to the triosephosphate isomerase family. Homodimer.

The protein resides in the cytoplasm. The enzyme catalyses D-glyceraldehyde 3-phosphate = dihydroxyacetone phosphate. Its pathway is carbohydrate biosynthesis; gluconeogenesis. It functions in the pathway carbohydrate degradation; glycolysis; D-glyceraldehyde 3-phosphate from glycerone phosphate: step 1/1. Functionally, involved in the gluconeogenesis. Catalyzes stereospecifically the conversion of dihydroxyacetone phosphate (DHAP) to D-glyceraldehyde-3-phosphate (G3P). This is Triosephosphate isomerase from Aliivibrio fischeri (strain ATCC 700601 / ES114) (Vibrio fischeri).